The sequence spans 101 residues: Small ribosomal subunit protein uS10 (101 aa).

Belongs to the universal ribosomal protein uS10 family. In terms of assembly, part of the 30S ribosomal subunit.

Functionally, involved in the binding of tRNA to the ribosomes. The polypeptide is Small ribosomal subunit protein uS10 (Mycobacterium ulcerans (strain Agy99)).